The sequence spans 382 residues: Pyrimidine monooxygenase RutA (382 aa).

FMN is bound by residues 68–69 (IK), Asn-134, Glu-143, 159–160 (RY), and Ser-209.

Belongs to the NtaA/SnaA/DszA monooxygenase family. RutA subfamily.

It carries out the reaction uracil + FMNH2 + NADH + O2 = (Z)-3-ureidoacrylate + FMN + NAD(+) + H2O + H(+). It catalyses the reaction thymine + FMNH2 + NADH + O2 = (Z)-2-methylureidoacrylate + FMN + NAD(+) + H2O + H(+). In terms of biological role, catalyzes the pyrimidine ring opening between N-3 and C-4 by an unusual flavin hydroperoxide-catalyzed mechanism, adding oxygen atoms in the process to yield ureidoacrylate peracid, that immediately reacts with FMN forming ureidoacrylate and FMN-N(5)-oxide. The FMN-N(5)-oxide reacts spontaneously with NADH to produce FMN. Requires the flavin reductase RutF to regenerate FMN in vivo. The protein is Pyrimidine monooxygenase RutA of Shigella flexneri serotype X (strain 2002017).